A 143-amino-acid polypeptide reads, in one-letter code: Large ribosomal subunit protein uL11 (143 aa).

The protein belongs to the universal ribosomal protein uL11 family. As to quaternary structure, part of the ribosomal stalk of the 50S ribosomal subunit. Interacts with L10 and the large rRNA to form the base of the stalk. L10 forms an elongated spine to which L12 dimers bind in a sequential fashion forming a multimeric L10(L12)X complex. Post-translationally, one or more lysine residues are methylated.

Its function is as follows. Forms part of the ribosomal stalk which helps the ribosome interact with GTP-bound translation factors. In Polynucleobacter necessarius subsp. necessarius (strain STIR1), this protein is Large ribosomal subunit protein uL11.